Here is a 267-residue protein sequence, read N- to C-terminus: L-aspartate dehydrogenase 2 (267 aa).

A123 and N189 together coordinate NAD(+). The active site involves H219.

It belongs to the L-aspartate dehydrogenase family.

It carries out the reaction L-aspartate + NADP(+) + H2O = oxaloacetate + NH4(+) + NADPH + H(+). The catalysed reaction is L-aspartate + NAD(+) + H2O = oxaloacetate + NH4(+) + NADH + H(+). It participates in cofactor biosynthesis; NAD(+) biosynthesis; iminoaspartate from L-aspartate (dehydrogenase route): step 1/1. Its function is as follows. Specifically catalyzes the NAD or NADP-dependent dehydrogenation of L-aspartate to iminoaspartate. The polypeptide is L-aspartate dehydrogenase 2 (Bordetella bronchiseptica (strain ATCC BAA-588 / NCTC 13252 / RB50) (Alcaligenes bronchisepticus)).